The following is a 245-amino-acid chain: 6-carboxyhexanoate--CoA ligase (245 aa).

It belongs to the BioW family. Homodimer. Mg(2+) is required as a cofactor.

The enzyme catalyses heptanedioate + ATP + CoA = 6-carboxyhexanoyl-CoA + AMP + diphosphate. The protein operates within metabolic intermediate metabolism; pimeloyl-CoA biosynthesis; pimeloyl-CoA from pimelate: step 1/1. Catalyzes the transformation of pimelate into pimeloyl-CoA with concomitant hydrolysis of ATP to AMP. This chain is 6-carboxyhexanoate--CoA ligase, found in Sulfurihydrogenibium sp. (strain YO3AOP1).